A 660-amino-acid chain; its full sequence is DNA topoisomerase I, plasmid (660 aa).

The 110-residue stretch at 1-110 (MKLMIIESPG…LRVTFNEITA (110 aa)) folds into the Toprim domain. Mg(2+)-binding residues include E7 and D79. A Topo IA-type catalytic domain is found at 124–550 (DVKRVAAQEA…KVHDQLNMEL (427 aa)). The interval 158–163 (SAGRVQ) is interaction with DNA. The O-(5'-phospho-DNA)-tyrosine intermediate role is filled by Y287. C4-type zinc fingers lie at residues 563–589 (CQECGKPLRRIPGKNGHFWGCSGYPDC) and 613–643 (CVKCGNPLKHLVKKGKGGYDFWGCSGFKEGC).

This sequence belongs to the type IA topoisomerase family. Monomer. Mg(2+) is required as a cofactor.

The catalysed reaction is ATP-independent breakage of single-stranded DNA, followed by passage and rejoining.. In terms of biological role, releases the supercoiling and torsional tension of DNA, which is introduced during the DNA replication and transcription, by transiently cleaving and rejoining one strand of the DNA duplex. Introduces a single-strand break via transesterification at a target site in duplex DNA. The scissile phosphodiester is attacked by the catalytic tyrosine of the enzyme, resulting in the formation of a DNA-(5'-phosphotyrosyl)-enzyme intermediate and the expulsion of a 3'-OH DNA strand. The free DNA strand then undergoes passage around the unbroken strand, thus removing DNA supercoils. Finally, in the religation step, the DNA 3'-OH attacks the covalent intermediate to expel the active-site tyrosine and restore the DNA phosphodiester backbone. The polypeptide is DNA topoisomerase I, plasmid (Xylella fastidiosa (strain 9a5c)).